The primary structure comprises 217 residues: Ribonuclease HII (217 aa).

The RNase H type-2 domain occupies K17–R207. The a divalent metal cation site is built by D23, E24, and D116.

It belongs to the RNase HII family. It depends on Mn(2+) as a cofactor. Mg(2+) is required as a cofactor.

It localises to the cytoplasm. The enzyme catalyses Endonucleolytic cleavage to 5'-phosphomonoester.. Endonuclease that specifically degrades the RNA of RNA-DNA hybrids. This Nitrosomonas europaea (strain ATCC 19718 / CIP 103999 / KCTC 2705 / NBRC 14298) protein is Ribonuclease HII.